Consider the following 1125-residue polypeptide: Exportin-6 (1125 aa).

Alanine 2 bears the N-acetylalanine mark. Positions 31–97 (IEELLNNFAQ…RSCLPKLLLA (67 aa)) constitute an Importin N-terminal domain. Serine 199 bears the Phosphoserine mark. Phosphothreonine is present on residues threonine 201 and threonine 204. Phosphoserine occurs at positions 208 and 224.

It belongs to the exportin family. As to quaternary structure, found in a complex with XPO6, Ran, ACTB and PFN1. Interacts with ACTB. Interacts with ACTB in a RanGTP-dependent manner.

The protein localises to the nucleus. The protein resides in the cytoplasm. Functionally, mediates the nuclear export of actin and profilin-actin complexes in somatic cells. The protein is Exportin-6 (Xpo6) of Mus musculus (Mouse).